Reading from the N-terminus, the 121-residue chain is Mediator of RNA polymerase II transcription subunit 22 (121 aa).

It belongs to the Mediator complex subunit 22 family. Component of the Mediator complex.

The protein localises to the nucleus. Component of the Mediator complex, a coactivator involved in the regulated transcription of nearly all RNA polymerase II-dependent genes. Mediator functions as a bridge to convey information from gene-specific regulatory proteins to the basal RNA polymerase II transcription machinery. Mediator is recruited to promoters by direct interactions with regulatory proteins and serves as a scaffold for the assembly of a functional preinitiation complex with RNA polymerase II and the general transcription factors. This Eremothecium gossypii (strain ATCC 10895 / CBS 109.51 / FGSC 9923 / NRRL Y-1056) (Yeast) protein is Mediator of RNA polymerase II transcription subunit 22 (SRB6).